A 1074-amino-acid polypeptide reads, in one-letter code: DNA annealing helicase and endonuclease ZRANB3 (1074 aa).

A Helicase ATP-binding domain is found at 46 to 208 (TFALRRDGRC…FMQIEALFPQ (163 aa)). A DNA annealing helicase activity region spans residues 46–481 (TFALRRDGRC…GRKEKLQAEE (436 aa)). 59 to 66 (DEMGLGKT) is an ATP binding site. Residues 157 to 160 (DESH) carry the DEAH box motif. Residues 325–481 (AVKDYIKMML…GRKEKLQAEE (157 aa)) form the Helicase C-terminal domain. A PIP-box motif is present at residues 519-526 (QRDIRSFF). Serine 566 carries the phosphoserine modification. Residues 617–647 (FCGEGWQCAFCTYINNSVLPYCEMCENPRGG) form a RanBP2-type zinc finger. Residues 659 to 719 (QNKNKNEKDD…RLTPQPGDEQ (61 aa)) form a disordered region. Composition is skewed to basic and acidic residues over residues 662-674 (NKNE…DTSK) and 696-711 (AKSK…EDRL). Residues 1006–1046 (PGEGHFWQVDHIKPVSGGGGQCSLDNLQTLCTVCHRERTAQ) enclose the HNH domain. The tract at residues 1006-1074 (PGEGHFWQVD…SDITRFLVKK (69 aa)) is endonuclease activity. Residues 1069-1073 (RFLVK) carry the APIM motif motif.

This sequence belongs to the SNF2/RAD54 helicase family. As to quaternary structure, interacts (via PIP-box and RanBP2-type zinc finger) with PCNA (when PCNA is polyubiquitinated via 'Lys-63'-linked polyubiquitin).

The protein localises to the nucleus. It is found in the chromosome. Functionally, DNA annealing helicase and endonuclease required to maintain genome stability at stalled or collapsed replication forks by facilitating fork restart and limiting inappropriate recombination that could occur during template switching events. Recruited to the sites of stalled DNA replication by polyubiquitinated PCNA and acts as a structure-specific endonuclease that cleaves the replication fork D-loop intermediate, generating an accessible 3'-OH group in the template of the leading strand, which is amenable to extension by DNA polymerase. In addition to endonuclease activity, also catalyzes the fork regression via annealing helicase activity in order to prevent disintegration of the replication fork and the formation of double-strand breaks. In Bos taurus (Bovine), this protein is DNA annealing helicase and endonuclease ZRANB3 (ZRANB3).